Here is a 124-residue protein sequence, read N- to C-terminus: Peptidyl-tRNA hydrolase (124 aa).

It belongs to the PTH2 family.

It localises to the cytoplasm. The enzyme catalyses an N-acyl-L-alpha-aminoacyl-tRNA + H2O = an N-acyl-L-amino acid + a tRNA + H(+). In terms of biological role, the natural substrate for this enzyme may be peptidyl-tRNAs which drop off the ribosome during protein synthesis. The polypeptide is Peptidyl-tRNA hydrolase (Aeropyrum pernix (strain ATCC 700893 / DSM 11879 / JCM 9820 / NBRC 100138 / K1)).